Consider the following 156-residue polypeptide: Small ribosomal subunit protein uS7 (156 aa).

Belongs to the universal ribosomal protein uS7 family. As to quaternary structure, part of the 30S ribosomal subunit. Contacts proteins S9 and S11.

One of the primary rRNA binding proteins, it binds directly to 16S rRNA where it nucleates assembly of the head domain of the 30S subunit. Is located at the subunit interface close to the decoding center, probably blocks exit of the E-site tRNA. This is Small ribosomal subunit protein uS7 from Clostridium perfringens (strain ATCC 13124 / DSM 756 / JCM 1290 / NCIMB 6125 / NCTC 8237 / Type A).